A 231-amino-acid chain; its full sequence is 5'-methylthioadenosine/S-adenosylhomocysteine nucleosidase (231 aa).

Glu12 serves as the catalytic Proton acceptor. Residues Gly78, Met153, and 174 to 175 (ME) each bind substrate. The active-site Proton donor is Asp198.

Belongs to the PNP/UDP phosphorylase family. MtnN subfamily.

It catalyses the reaction S-adenosyl-L-homocysteine + H2O = S-(5-deoxy-D-ribos-5-yl)-L-homocysteine + adenine. The catalysed reaction is S-methyl-5'-thioadenosine + H2O = 5-(methylsulfanyl)-D-ribose + adenine. It carries out the reaction 5'-deoxyadenosine + H2O = 5-deoxy-D-ribose + adenine. Its pathway is amino-acid biosynthesis; L-methionine biosynthesis via salvage pathway; S-methyl-5-thio-alpha-D-ribose 1-phosphate from S-methyl-5'-thioadenosine (hydrolase route): step 1/2. Catalyzes the irreversible cleavage of the glycosidic bond in both 5'-methylthioadenosine (MTA) and S-adenosylhomocysteine (SAH/AdoHcy) to adenine and the corresponding thioribose, 5'-methylthioribose and S-ribosylhomocysteine, respectively. Also cleaves 5'-deoxyadenosine, a toxic by-product of radical S-adenosylmethionine (SAM) enzymes, into 5-deoxyribose and adenine. This is 5'-methylthioadenosine/S-adenosylhomocysteine nucleosidase from Bacillus thuringiensis subsp. konkukian (strain 97-27).